The primary structure comprises 442 residues: NADH-quinone oxidoreductase subunit D (442 aa).

Belongs to the complex I 49 kDa subunit family. NDH-1 is composed of 14 different subunits. Subunits NuoB, C, D, E, F, and G constitute the peripheral sector of the complex.

The protein localises to the cell membrane. It catalyses the reaction a quinone + NADH + 5 H(+)(in) = a quinol + NAD(+) + 4 H(+)(out). In terms of biological role, NDH-1 shuttles electrons from NADH, via FMN and iron-sulfur (Fe-S) centers, to quinones in the respiratory chain. The immediate electron acceptor for the enzyme in this species is believed to be a menaquinone. Couples the redox reaction to proton translocation (for every two electrons transferred, four hydrogen ions are translocated across the cytoplasmic membrane), and thus conserves the redox energy in a proton gradient. In Mycolicibacterium smegmatis (strain ATCC 700084 / mc(2)155) (Mycobacterium smegmatis), this protein is NADH-quinone oxidoreductase subunit D.